The primary structure comprises 294 residues: Ribosomal RNA small subunit methyltransferase H (294 aa).

Residues 40 to 42, D59, F86, D102, and Q109 each bind S-adenosyl-L-methionine; that span reads GGH.

Belongs to the methyltransferase superfamily. RsmH family.

It is found in the cytoplasm. It carries out the reaction cytidine(1402) in 16S rRNA + S-adenosyl-L-methionine = N(4)-methylcytidine(1402) in 16S rRNA + S-adenosyl-L-homocysteine + H(+). Specifically methylates the N4 position of cytidine in position 1402 (C1402) of 16S rRNA. The chain is Ribosomal RNA small subunit methyltransferase H from Cyanothece sp. (strain PCC 7425 / ATCC 29141).